Consider the following 152-residue polypeptide: Xanthine-guanine phosphoribosyltransferase (152 aa).

Residues 37 to 38 (RG), R69, and 88 to 96 (DDLVDTGGT) contribute to the 5-phospho-alpha-D-ribose 1-diphosphate site. R69 contributes to the GMP binding site. D89 is a binding site for Mg(2+). Residues D92 and I135 each coordinate guanine. Xanthine contacts are provided by D92 and I135. Residues 92-96 (DTGGT) and 134-135 (WI) contribute to the GMP site.

Belongs to the purine/pyrimidine phosphoribosyltransferase family. XGPT subfamily. Homotetramer. The cofactor is Mg(2+).

It localises to the cell inner membrane. The enzyme catalyses GMP + diphosphate = guanine + 5-phospho-alpha-D-ribose 1-diphosphate. It catalyses the reaction XMP + diphosphate = xanthine + 5-phospho-alpha-D-ribose 1-diphosphate. It carries out the reaction IMP + diphosphate = hypoxanthine + 5-phospho-alpha-D-ribose 1-diphosphate. The protein operates within purine metabolism; GMP biosynthesis via salvage pathway; GMP from guanine: step 1/1. It participates in purine metabolism; XMP biosynthesis via salvage pathway; XMP from xanthine: step 1/1. Functionally, purine salvage pathway enzyme that catalyzes the transfer of the ribosyl-5-phosphate group from 5-phospho-alpha-D-ribose 1-diphosphate (PRPP) to the N9 position of the 6-oxopurines guanine and xanthine to form the corresponding ribonucleotides GMP (guanosine 5'-monophosphate) and XMP (xanthosine 5'-monophosphate), with the release of PPi. To a lesser extent, also acts on hypoxanthine. This Escherichia coli (strain UTI89 / UPEC) protein is Xanthine-guanine phosphoribosyltransferase.